The following is a 37-amino-acid chain: Large ribosomal subunit protein bL36c (37 aa).

The protein belongs to the bacterial ribosomal protein bL36 family.

Its subcellular location is the plastid. It is found in the chloroplast. The polypeptide is Large ribosomal subunit protein bL36c (Pinus koraiensis (Korean pine)).